We begin with the raw amino-acid sequence, 448 residues long: NK1 transcription factor-related protein 1 (448 aa).

The span at 1-13 shows a compositional bias: low complexity; sequence MSASGPEAPGDIP. Disordered regions lie at residues 1-80, 115-299, and 350-397; these read MSAS…LRPT, ASAP…PRRA, and KWKK…GAPL. Residues 14 to 30 show a composition bias toward pro residues; sequence ALPPPPQPGSGPAPPAP. Low complexity-rich tracts occupy residues 62–79 and 115–129; these read PAAPEGAGAARPAAPLRP and ASAPCAPAPAASGRP. Residues 130-139 are compositionally biased toward basic and acidic residues; that stretch reads PRAEELERRA. Acidic residues predominate over residues 186–203; the sequence is SGDEVPDDEDDDEDEAPE. Residues 205–214 show a composition bias toward basic and acidic residues; it reads EAARGAEEAR. 2 stretches are compositionally biased toward gly residues: residues 215 to 227 and 259 to 270; these read GGGGGLGARGSGC and PPGGAAAPGGAG. The span at 271 to 280 shows a compositional bias: low complexity; that stretch reads TTPQGTATAA. Residues 296-355 constitute a DNA-binding region (homeobox); it reads PRRARTAFTYEQLVALENKFKATRYLSVCERLNLALSLSLTETQVKIWFQNRRTKWKKQN. Residues 364-382 show a composition bias toward gly residues; the sequence is TGGGGGPGPGAGPGTGLPG.

It belongs to the NK-1 homeobox family. Expressed in hemopoietic progenitor cells.

Its subcellular location is the nucleus. May be required for the coordinated crosstalk of factors involved in the maintenance of energy homeostasis, possibly by regulating the transcription of specific factors involved in energy balance. In Homo sapiens (Human), this protein is NK1 transcription factor-related protein 1.